The sequence spans 335 residues: Pyruvate dehydrogenase E1 component subunit beta (335 aa).

Glu-60 provides a ligand contact to thiamine diphosphate. Residues Ala-161, Ile-162, and Asn-166 each coordinate K(+).

In terms of assembly, heterodimer of an alpha and a beta chain. The cofactor is thiamine diphosphate.

It is found in the plastid. Its subcellular location is the chloroplast. It catalyses the reaction N(6)-[(R)-lipoyl]-L-lysyl-[protein] + pyruvate + H(+) = N(6)-[(R)-S(8)-acetyldihydrolipoyl]-L-lysyl-[protein] + CO2. In terms of biological role, the pyruvate dehydrogenase complex catalyzes the overall conversion of pyruvate to acetyl-CoA and CO(2). It contains multiple copies of three enzymatic components: pyruvate dehydrogenase (E1), dihydrolipoamide acetyltransferase (E2) and lipoamide dehydrogenase (E3). The sequence is that of Pyruvate dehydrogenase E1 component subunit beta (pdhB) from Chlorokybus atmophyticus (Soil alga).